A 437-amino-acid polypeptide reads, in one-letter code: Probable E3 ubiquitin-protein ligase TRIML2 (437 aa).

Residues 14–55 form a B box-type zinc finger; it reads TEDAYCETHLEPTRLFCDVDQITLCSKCFQSQEHKHHMVCGI. Zn(2+) contacts are provided by C19, H22, C41, and H47. Residues 55-200 are a coiled coil; that stretch reads IQEAAENYRK…IVELEKKCGE (146 aa). The 199-residue stretch at 231-429 folds into the B30.2/SPRY domain; that stretch reads DLSLCHIRGL…DSLTILQHGP (199 aa).

It catalyses the reaction S-ubiquitinyl-[E2 ubiquitin-conjugating enzyme]-L-cysteine + [acceptor protein]-L-lysine = [E2 ubiquitin-conjugating enzyme]-L-cysteine + N(6)-ubiquitinyl-[acceptor protein]-L-lysine.. It participates in protein modification; protein ubiquitination. This chain is Probable E3 ubiquitin-protein ligase TRIML2, found in Homo sapiens (Human).